Here is a 240-residue protein sequence, read N- to C-terminus: Methylthioribulose-1-phosphate dehydratase (240 aa).

Residues 1–17 show a composition bias toward polar residues; that stretch reads MAQEVENNNNDHLVQSS. The interval 1–20 is disordered; the sequence is MAQEVENNNNDHLVQSSDPE. Cys-100 lines the substrate pocket. 2 residues coordinate Zn(2+): His-117 and His-119. Glu-146 (proton donor/acceptor) is an active-site residue. His-202 provides a ligand contact to Zn(2+).

The protein belongs to the aldolase class II family. MtnB subfamily. It depends on Zn(2+) as a cofactor.

The protein localises to the cytoplasm. The enzyme catalyses 5-(methylsulfanyl)-D-ribulose 1-phosphate = 5-methylsulfanyl-2,3-dioxopentyl phosphate + H2O. It functions in the pathway amino-acid biosynthesis; L-methionine biosynthesis via salvage pathway; L-methionine from S-methyl-5-thio-alpha-D-ribose 1-phosphate: step 2/6. Functionally, catalyzes the dehydration of methylthioribulose-1-phosphate (MTRu-1-P) into 2,3-diketo-5-methylthiopentyl-1-phosphate (DK-MTP-1-P). The chain is Methylthioribulose-1-phosphate dehydratase from Neosartorya fischeri (strain ATCC 1020 / DSM 3700 / CBS 544.65 / FGSC A1164 / JCM 1740 / NRRL 181 / WB 181) (Aspergillus fischerianus).